Consider the following 159-residue polypeptide: Large ribosomal subunit protein eL29 (159 aa).

Residues 1-26 show a composition bias toward basic residues; that stretch reads MAKSKNHTTHNQSRKWHRNGIKKPRS. The disordered stretch occupies residues 1–32; that stretch reads MAKSKNHTTHNQSRKWHRNGIKKPRSQRYESL. Lys-5 is modified (N6-methyllysine). Ser-31 bears the Phosphoserine mark. Lys-33 bears the N6-acetyllysine mark. The segment covering 117 to 127 has biased composition (basic residues); the sequence is RLCRPKAKAKA. The tract at residues 117 to 159 is disordered; the sequence is RLCRPKAKAKAKAKDQTKAQAAAPASVPAQAPKRTQAPTKASE. The segment covering 134–149 has biased composition (low complexity); sequence KAQAAAPASVPAQAPK. Ser-142 is modified (phosphoserine).

The protein belongs to the eukaryotic ribosomal protein eL29 family. Component of the large ribosomal subunit.

It localises to the cytoplasm. In terms of biological role, component of the large ribosomal subunit. The ribosome is a large ribonucleoprotein complex responsible for the synthesis of proteins in the cell. The sequence is that of Large ribosomal subunit protein eL29 (RPL29) from Homo sapiens (Human).